We begin with the raw amino-acid sequence, 369 residues long: Ferredoxin--NADP reductase 2 (369 aa).

The segment at 1–23 is disordered; it reads MDLSIPNPVADTTKQVDGGSPAG. FAD contacts are provided by Asp58, Gln66, Tyr71, Val111, Phe146, Asp311, and Thr352.

Belongs to the ferredoxin--NADP reductase type 2 family. Homodimer. It depends on FAD as a cofactor.

It catalyses the reaction 2 reduced [2Fe-2S]-[ferredoxin] + NADP(+) + H(+) = 2 oxidized [2Fe-2S]-[ferredoxin] + NADPH. This Cupriavidus necator (strain ATCC 17699 / DSM 428 / KCTC 22496 / NCIMB 10442 / H16 / Stanier 337) (Ralstonia eutropha) protein is Ferredoxin--NADP reductase 2.